The chain runs to 281 residues: Proteasome subunit beta (281 aa).

A propeptide spans 1–53 (MEANTRSTGRLPAAFLTPGSSSFMDFLSDQSPEMLPGNRSLPPLQGAVEAPHG) (removed in mature form; by autocatalysis). The active-site Nucleophile is threonine 54.

The protein belongs to the peptidase T1B family. The 20S proteasome core is composed of 14 alpha and 14 beta subunits that assemble into four stacked heptameric rings, resulting in a barrel-shaped structure. The two inner rings, each composed of seven catalytic beta subunits, are sandwiched by two outer rings, each composed of seven alpha subunits. The catalytic chamber with the active sites is on the inside of the barrel. Has a gated structure, the ends of the cylinder being occluded by the N-termini of the alpha-subunits. Is capped by the proteasome-associated ATPase, ARC.

It localises to the cytoplasm. It carries out the reaction Cleavage of peptide bonds with very broad specificity.. Its pathway is protein degradation; proteasomal Pup-dependent pathway. The formation of the proteasomal ATPase ARC-20S proteasome complex, likely via the docking of the C-termini of ARC into the intersubunit pockets in the alpha-rings, may trigger opening of the gate for substrate entry. Interconversion between the open-gate and close-gate conformations leads to a dynamic regulation of the 20S proteasome proteolysis activity. In terms of biological role, component of the proteasome core, a large protease complex with broad specificity involved in protein degradation. The protein is Proteasome subunit beta of Streptomyces griseus subsp. griseus (strain JCM 4626 / CBS 651.72 / NBRC 13350 / KCC S-0626 / ISP 5235).